Reading from the N-terminus, the 863-residue chain is Desmocollin-2 (863 aa).

Residues 1 to 89 (KFIGRVNLKE…QEKVLRRAKR (89 aa)) constitute a propeptide that is removed on maturation. 5 Cadherin domains span residues 90–197 (RWAP…APIF), 198–309 (TETS…LPTF), 310–423 (TRSS…GPEC), 424–528 (DPRV…VIPQ), and 529–644 (RTVV…ILGK). Over 90 to 644 (RWAPIPCSVP…TGNREVILGK (555 aa)) the chain is Extracellular. N-linked (GlcNAc...) asparagine glycosylation occurs at asparagine 120. N-linked (GlcNAc...) asparagine glycosylation is found at asparagine 346, asparagine 495, and asparagine 579. Residues 645–665 (WAILAILLGIALLFCILFTLV) traverse the membrane as a helical segment. Residues 666–863 (CGATTGADKK…RTLAETCMKR (198 aa)) lie on the Cytoplasmic side of the membrane. Phosphoserine occurs at positions 826, 830, and 835.

As to quaternary structure, interacts with DSP, PKP2 and JUP. Interacts with DSG3; the interaction may limit the interaction of DSC3 with p38MAPK family members and therefore repress p38MAPK signaling activation. In terms of tissue distribution, expressed in esophagus and rumen. Weakly expressed in epithelia and cardiac muscle.

The protein resides in the cell membrane. Its subcellular location is the cell junction. The protein localises to the desmosome. Its function is as follows. A component of desmosome cell-cell junctions which are required for positive regulation of cellular adhesion. Promotes timely incorporation of DSG2 into desmosome intercellular junctions and promotes interaction of desmosome cell junctions with intermediate filament cytokeratin, via modulation of DSP phosphorylation. Plays an important role in desmosome-mediated maintenance of intestinal epithelial cell intercellular adhesion strength and barrier function. Positively regulates wound healing of intestinal mucosa via promotion of epithelial cell migration, and also plays a role in mechanotransduction of force between intestinal epithelial cells and extracellular matrix. May contribute to epidermal cell positioning (stratification) by mediating differential adhesiveness between cells that express different isoforms. The chain is Desmocollin-2 (DSC2) from Bos taurus (Bovine).